We begin with the raw amino-acid sequence, 139 residues long: ATP synthase epsilon chain (139 aa).

Belongs to the ATPase epsilon chain family. F-type ATPases have 2 components, CF(1) - the catalytic core - and CF(0) - the membrane proton channel. CF(1) has five subunits: alpha(3), beta(3), gamma(1), delta(1), epsilon(1). CF(0) has three main subunits: a, b and c.

The protein localises to the cell inner membrane. Its function is as follows. Produces ATP from ADP in the presence of a proton gradient across the membrane. The polypeptide is ATP synthase epsilon chain (Nitrosospira multiformis (strain ATCC 25196 / NCIMB 11849 / C 71)).